Reading from the N-terminus, the 596-residue chain is Elongation factor 4 (596 aa).

A tr-type G domain is found at 2–184 (KHIRNFSIIA…TIVAQIPPPE (183 aa)). GTP contacts are provided by residues 14–19 (DHGKST) and 131–134 (NKID).

It belongs to the TRAFAC class translation factor GTPase superfamily. Classic translation factor GTPase family. LepA subfamily.

The protein localises to the cell inner membrane. It catalyses the reaction GTP + H2O = GDP + phosphate + H(+). Functionally, required for accurate and efficient protein synthesis under certain stress conditions. May act as a fidelity factor of the translation reaction, by catalyzing a one-codon backward translocation of tRNAs on improperly translocated ribosomes. Back-translocation proceeds from a post-translocation (POST) complex to a pre-translocation (PRE) complex, thus giving elongation factor G a second chance to translocate the tRNAs correctly. Binds to ribosomes in a GTP-dependent manner. The sequence is that of Elongation factor 4 from Shewanella loihica (strain ATCC BAA-1088 / PV-4).